The sequence spans 311 residues: Probable manganese-dependent inorganic pyrophosphatase (311 aa).

6 residues coordinate Mn(2+): His-9, Asp-13, Asp-15, Asp-77, His-99, and Asp-151.

It belongs to the PPase class C family. Requires Mn(2+) as cofactor.

Its subcellular location is the cytoplasm. It catalyses the reaction diphosphate + H2O = 2 phosphate + H(+). The polypeptide is Probable manganese-dependent inorganic pyrophosphatase (Streptococcus pyogenes serotype M1).